Reading from the N-terminus, the 1002-residue chain is Protein SMAX1-LIKE 7 (1002 aa).

In terms of domain architecture, Clp R spans 8–185; it reads ARQCLTEETA…DVLHPPVTSQ (178 aa). Repeat regions lie at residues 12 to 86 and 103 to 185; these read LTEE…LDRL and VSNS…VTSQ. The EAR motif lies at 854–858; sequence LDLNL.

The protein belongs to the ClpA/ClpB family. As to quaternary structure, interacts with TPL/TPR in an EAR-motif dependent manner. Interacts with TPL, TPR1, TPR2 and TPR4. Interacts with MAX2 and TPR2. Interacts with D14. The interaction with D14 occurs in the presence of (2'R) stereoisomers of strigolactones, but not (2'S) stereoisomers. Post-translationally, ubiquitinated upon strigolactone treatment. Strigolactone, but not karrikin, triggers rapid SCF(MAX2)-dependent degradation. In terms of tissue distribution, expressed in axillary branches and roots. Detected in seedlings and leaves. Expressed in the primary rosette buds and expanding leaves of adult rosettes, the vasculature of the hypocotyls, cotyledons, and mature roots, and in the midvein and petioles of young leaves.

It is found in the nucleus. Its function is as follows. Probable component of a transcriptional corepressor complex involved in branching control. Regulates cotyledon expansion and lateral root growth, but not germination or hypocotyl elongation. Promotes auxin transport and PIN1 accumulation in the stem and represses BRC1/TCP18 expression in axillary buds. This Arabidopsis thaliana (Mouse-ear cress) protein is Protein SMAX1-LIKE 7.